Here is a 283-residue protein sequence, read N- to C-terminus: MSQKIILNNSYSITKSHLFHIVDPSPWPVLTSFALLLLVIGGVSFMHGYKFNIYILSAGIISVGYCLYSWWRDIVKEGIVEHQHTSPVRKGLQIGMALFILTEIVFFGVFFASFFKSSLSPVGLLDGVWVVKQGIWPPPTIKTFEPFDIPFINTLILLLSGTTVTWAHYALEEKNQKDCVTALALTILLGIFFTTMQAYEYYHAAFKFTDGIYASNFYLATGFHGAHVIIGTIFLIICYFRAKRGDFTTEGNGHLGFECAAWYWHFVDVVWLFLFTFVYIFGS.

The next 6 membrane-spanning stretches (helical) occupy residues proline 26–methionine 46, phenylalanine 51–tryptophan 71, isoleucine 94–phenylalanine 114, cysteine 179–tyrosine 199, phenylalanine 217–isoleucine 237, and alanine 261–phenylalanine 281.

It belongs to the cytochrome c oxidase subunit 3 family.

It localises to the cell membrane. The enzyme catalyses 4 Fe(II)-[cytochrome c] + O2 + 8 H(+)(in) = 4 Fe(III)-[cytochrome c] + 2 H2O + 4 H(+)(out). In Rickettsia conorii (strain ATCC VR-613 / Malish 7), this protein is Probable cytochrome c oxidase subunit 3 (ctaE).